The sequence spans 402 residues: Alanine racemase (402 aa).

The Proton acceptor; specific for D-alanine role is filled by lysine 34. An N6-(pyridoxal phosphate)lysine modification is found at lysine 34. Residue arginine 133 coordinates substrate. Positions 226 to 271 constitute an RPE1 insert domain; the sequence is EVSYNLSYKEKFERNTPALATTVCINKCADVNTRLTYKVPLKGSYR. Residue tyrosine 296 is the Proton acceptor; specific for L-alanine of the active site. Methionine 344 lines the substrate pocket.

It belongs to the alanine racemase family. The cofactor is pyridoxal 5'-phosphate.

The catalysed reaction is L-alanine = D-alanine. The protein operates within amino-acid biosynthesis; D-alanine biosynthesis; D-alanine from L-alanine: step 1/1. Functionally, catalyzes the interconversion of L-alanine and D-alanine. May also act on other amino acids. This is Alanine racemase (alr) from Rickettsia typhi (strain ATCC VR-144 / Wilmington).